Here is a 149-residue protein sequence, read N- to C-terminus: MDWISIILLVLLALGVIGNNATVSIAVAILLLMRLLSLERYFPLLEQHGLQLGIIILTIGIMTPLASGKINPSSFLEIFTNWHSLLAVAVGMFVAYLAGKGTVLMSQNPLIVTGLLLGTIAGVTFFRGVAVGPLIAAGILAFILQFLPK.

5 helical membrane-spanning segments follow: residues 3-23 (WISIILLVLLALGVIGNNATV), 48-68 (HGLQLGIIILTIGIMTPLASG), 85-105 (LLAVAVGMFVAYLAGKGTVLM), 106-126 (SQNPLIVTGLLLGTIAGVTFF), and 128-148 (GVAVGPLIAAGILAFILQFLP).

This sequence belongs to the UPF0756 family.

It localises to the cell membrane. The protein is UPF0756 membrane protein BBR47_32760 of Brevibacillus brevis (strain 47 / JCM 6285 / NBRC 100599).